Consider the following 234-residue polypeptide: Transmembrane protein 65 (234 aa).

The N-terminal 55 residues, 1–55 (MSRLLPLLGSRTARSLRPGPAAAPRLPSWCCCGRGLLALGVPGGPRLLGTHPKKE), are a transit peptide targeting the mitochondrion. Topologically, residues 56–110 (PMEALNTAQGARDFIYSLHSTERSCLLKELHRFESIAIAQEKLEALPPTPGQLRY) are cytoplasmic. A helical membrane pass occupies residues 111 to 131 (VFFHNAIPFVGFGFLDNAIMI). At 132–138 (VAGTQIE) the chain is on the extracellular side. A helical transmembrane segment spans residues 139-159 (LSIGIILGISTMAAAALGNLV). Topologically, residues 160-203 (SDLAGLGLAGYVEALASRLGLSIPDLTPKQVDMWQTRVSTHLGK) are cytoplasmic. Residues 204-224 (AVGVTIGCILGMFPLIFFGGS) form a helical membrane-spanning segment. At 225–234 (EEDEKLETTN) the chain is on the extracellular side.

In terms of assembly, monomer. Homodimer. Interacts with GJA1. Interacts weakly with DSP. Interacts with SCN1B. Predominantly expressed in the ventricular tissue (at protein level).

The protein resides in the cell membrane. Its subcellular location is the mitochondrion inner membrane. Essential for maintaining proper cardiac intercalated disk (ICD) structure and function as well as cardiac conduction velocity in the heart. Its association with SCN1B is required for stabilizing the perinexus in the ICD and for localization of GJA1 and SCN5A to the ICD. May regulate the function of the gap junction protein GJA1 and may contribute to the stability and proper localization of GJA1 to cardiac intercalated disk thereby regulating gap junction communication. Regulates mitochondrial respiration and mitochondrial DNA copy number maintenance. This chain is Transmembrane protein 65 (Tmem65), found in Mus musculus (Mouse).